A 181-amino-acid chain; its full sequence is Cell division protein ZapC (181 aa).

It belongs to the ZapC family. Interacts directly with FtsZ.

The protein localises to the cytoplasm. Functionally, contributes to the efficiency of the cell division process by stabilizing the polymeric form of the cell division protein FtsZ. Acts by promoting interactions between FtsZ protofilaments and suppressing the GTPase activity of FtsZ. The protein is Cell division protein ZapC of Shewanella woodyi (strain ATCC 51908 / MS32).